Here is a 276-residue protein sequence, read N- to C-terminus: uncharacterized protein (276 aa).

7 helical membrane passes run 5-25 (TDLI…GMLA), 32-52 (PLVG…GFVG), 64-84 (GVIL…LLAV), 104-124 (AGLA…GLAL), 149-169 (IAVG…VLLP), 193-213 (LWVT…VMLV), and 244-264 (VGIA…GAFF).

The protein belongs to the monovalent cation:proton antiporter 2 (CPA2) transporter (TC 2.A.37) family.

It localises to the cell membrane. This is an uncharacterized protein from Methylorubrum extorquens (Methylobacterium dichloromethanicum).